Consider the following 480-residue polypeptide: Cobyric acid synthase (480 aa).

One can recognise a GATase cobBQ-type domain in the interval 246-434; the sequence is KILIAVPILP…VHGLFSELAQ (189 aa). The active-site Nucleophile is the C328. Residue H426 is part of the active site.

Belongs to the CobB/CobQ family. CobQ subfamily.

Its pathway is cofactor biosynthesis; adenosylcobalamin biosynthesis. In terms of biological role, catalyzes amidations at positions B, D, E, and G on adenosylcobyrinic A,C-diamide. NH(2) groups are provided by glutamine, and one molecule of ATP is hydrogenolyzed for each amidation. The protein is Cobyric acid synthase of Methylocella silvestris (strain DSM 15510 / CIP 108128 / LMG 27833 / NCIMB 13906 / BL2).